A 306-amino-acid chain; its full sequence is Palmitoyl-protein thioesterase 1 (306 aa).

A signal peptide spans 1–27 (MASSCSRRLLAAALLPWCCAAWALGHL). Intrachain disulfides connect Cys45-Cys46, Cys96-Cys128, and Cys152-Cys160. Ser115 is an active-site residue. Asn197, Asn212, and Asn232 each carry an N-linked (GlcNAc...) asparagine glycan. Active-site residues include Asp233 and His289.

Belongs to the palmitoyl-protein thioesterase family. Interacts with CLN5, ATP5F1A and ATP5F1B. Glycosylated. In terms of tissue distribution, highest level in testis and kidney, lower in heart, brain and lung and lowest in skeletal muscle.

The protein resides in the lysosome. The protein localises to the secreted. It is found in the golgi apparatus. It localises to the endoplasmic reticulum. The catalysed reaction is S-hexadecanoyl-L-cysteinyl-[protein] + H2O = L-cysteinyl-[protein] + hexadecanoate + H(+). The enzyme catalyses hexadecanoyl-CoA + H2O = hexadecanoate + CoA + H(+). It carries out the reaction S-hexadecanoyl-N-acetylcysteamine + H2O = N-acetylcysteamine + hexadecanoate + H(+). It catalyses the reaction S-hexadecanoyl-N-acetylcysteine methyl ester + H2O = N-acetylcysteine methyl ester + hexadecanoate + H(+). Functionally, has thioesterase activity against fatty acid thioesters with 14 -18 carbons, including palmitoyl-CoA, S-palmitoyl-N-acetylcysteamine, and palmitoylated proteins. In contrast to PPT2, PPT1 can hydrolyze palmitoylated proteins and palmitoylcysteine. The polypeptide is Palmitoyl-protein thioesterase 1 (Ppt1) (Mus musculus (Mouse)).